The sequence spans 434 residues: Enolase (434 aa).

Glutamine 163 is a (2R)-2-phosphoglycerate binding site. Residue glutamate 205 is the Proton donor of the active site. Residues aspartate 242, glutamate 291, and aspartate 318 each contribute to the Mg(2+) site. (2R)-2-phosphoglycerate-binding residues include lysine 343, arginine 372, serine 373, and lysine 394. The active-site Proton acceptor is the lysine 343.

Belongs to the enolase family. It depends on Mg(2+) as a cofactor.

It localises to the cytoplasm. The protein localises to the secreted. It is found in the cell surface. The catalysed reaction is (2R)-2-phosphoglycerate = phosphoenolpyruvate + H2O. It participates in carbohydrate degradation; glycolysis; pyruvate from D-glyceraldehyde 3-phosphate: step 4/5. Its function is as follows. Catalyzes the reversible conversion of 2-phosphoglycerate (2-PG) into phosphoenolpyruvate (PEP). It is essential for the degradation of carbohydrates via glycolysis. The sequence is that of Enolase from Streptococcus thermophilus (strain ATCC BAA-491 / LMD-9).